The following is a 487-amino-acid chain: Chromosomal replication initiator protein DnaA (487 aa).

The interval 1-79 (MPNSMWHQCL…QAPRVMMKVG (79 aa)) is domain I, interacts with DnaA modulators. The disordered stretch occupies residues 78–138 (VGSAPKPTDP…PAPKAQAERR (61 aa)). Residues 79 to 150 (GSAPKPTDPV…QVEGDIKHQS (72 aa)) form a domain II region. A domain III, AAA+ region region spans residues 151–367 (FLNETFTFDT…GALRLVIANA (217 aa)). Gly195, Gly197, Lys198, and Thr199 together coordinate ATP. The interval 368–487 (HFTGSEITPP…YQNFMRLLTT (120 aa)) is domain IV, binds dsDNA.

The protein belongs to the DnaA family. Oligomerizes as a right-handed, spiral filament on DNA at oriC.

The protein resides in the cytoplasm. Its function is as follows. Plays an essential role in the initiation and regulation of chromosomal replication. ATP-DnaA binds to the origin of replication (oriC) to initiate formation of the DNA replication initiation complex once per cell cycle. Binds the DnaA box (a 9 base pair repeat at the origin) and separates the double-stranded (ds)DNA. Forms a right-handed helical filament on oriC DNA; dsDNA binds to the exterior of the filament while single-stranded (ss)DNA is stabiized in the filament's interior. The ATP-DnaA-oriC complex binds and stabilizes one strand of the AT-rich DNA unwinding element (DUE), permitting loading of DNA polymerase. After initiation quickly degrades to an ADP-DnaA complex that is not apt for DNA replication. Binds acidic phospholipids. This is Chromosomal replication initiator protein DnaA from Marinobacter nauticus (strain ATCC 700491 / DSM 11845 / VT8) (Marinobacter aquaeolei).